We begin with the raw amino-acid sequence, 431 residues long: 3-phosphoshikimate 1-carboxyvinyltransferase (431 aa).

3 residues coordinate 3-phosphoshikimate: Lys-22, Ser-23, and Arg-27. Lys-22 contacts phosphoenolpyruvate. The phosphoenolpyruvate site is built by Gly-94 and Arg-122. 6 residues coordinate 3-phosphoshikimate: Ser-168, Ser-169, Gln-170, Ser-196, Asp-315, and Lys-342. Gln-170 is a binding site for phosphoenolpyruvate. Asp-315 acts as the Proton acceptor in catalysis. Phosphoenolpyruvate-binding residues include Arg-346, Arg-390, and Lys-414.

The protein belongs to the EPSP synthase family. As to quaternary structure, monomer.

Its subcellular location is the cytoplasm. It catalyses the reaction 3-phosphoshikimate + phosphoenolpyruvate = 5-O-(1-carboxyvinyl)-3-phosphoshikimate + phosphate. It functions in the pathway metabolic intermediate biosynthesis; chorismate biosynthesis; chorismate from D-erythrose 4-phosphate and phosphoenolpyruvate: step 6/7. In terms of biological role, catalyzes the transfer of the enolpyruvyl moiety of phosphoenolpyruvate (PEP) to the 5-hydroxyl of shikimate-3-phosphate (S3P) to produce enolpyruvyl shikimate-3-phosphate and inorganic phosphate. This is 3-phosphoshikimate 1-carboxyvinyltransferase from Nitrosomonas europaea (strain ATCC 19718 / CIP 103999 / KCTC 2705 / NBRC 14298).